Reading from the N-terminus, the 220-residue chain is Glutathione peroxidase (220 aa).

The active site involves U64. U64 is a non-standard amino acid (selenocysteine).

Belongs to the glutathione peroxidase family. In terms of processing, during periods of oxidative stress, Sec-64 may react with a superoxide radical, irreversibly lose hydroselenide and be converted to dehydroalanine.

The enzyme catalyses 2 glutathione + H2O2 = glutathione disulfide + 2 H2O. In terms of biological role, may protect the virus and component of infected cells from oxidative damage by peroxides whose formation may be stimulated by infection. This is Glutathione peroxidase (GPX1) from Homo sapiens (Human).